A 768-amino-acid polypeptide reads, in one-letter code: Solabiose phosphorylase (768 aa).

D456 acts as the Proton donor in catalysis.

The protein belongs to the glycosyl hydrolase 94 family.

It carries out the reaction solabiose + phosphate = D-galactose + alpha-D-glucose 1-phosphate. Its function is as follows. Catalyzes the reversible phosphorolysis of solabiose. Catalyzes the phosphorolysis and synthesis of solabiose through a sequential bi-bi mechanism involving the formation of a ternary complex. Is probably involved in the metabolism of solabiose released from solabiose-containing compounds. In Paenibacillus borealis, this protein is Solabiose phosphorylase.